The following is a 502-amino-acid chain: Archaemetzincin-1 (502 aa).

His-262 contacts Zn(2+). Glu-263 functions as the Proton acceptor in the catalytic mechanism. His-266, Cys-273, Cys-278, Cys-297, and Cys-300 together coordinate Zn(2+). The interval 336-383 is disordered; sequence GEPSVSEDTLPFSADSGMGCESDTEPVTSPSEPVTPDGWSHPFPDGPE.

The protein belongs to the peptidase M54 family. Requires Zn(2+) as cofactor.

In terms of biological role, probable zinc metalloprotease. The sequence is that of Archaemetzincin-1 (Amz1) from Mus musculus (Mouse).